Reading from the N-terminus, the 76-residue chain is Exodeoxyribonuclease 7 small subunit (76 aa).

This sequence belongs to the XseB family. Heterooligomer composed of large and small subunits.

It localises to the cytoplasm. The catalysed reaction is Exonucleolytic cleavage in either 5'- to 3'- or 3'- to 5'-direction to yield nucleoside 5'-phosphates.. Its function is as follows. Bidirectionally degrades single-stranded DNA into large acid-insoluble oligonucleotides, which are then degraded further into small acid-soluble oligonucleotides. The sequence is that of Exodeoxyribonuclease 7 small subunit from Geobacter sulfurreducens (strain ATCC 51573 / DSM 12127 / PCA).